The sequence spans 118 residues: NADH-quinone oxidoreductase subunit A (118 aa).

3 helical membrane-spanning segments follow: residues 8 to 28, 64 to 84, and 87 to 107; these read IGIF…LAFF, ALAF…AVAF, and VGLY…AGLL.

The protein belongs to the complex I subunit 3 family. NDH-1 is composed of 14 different subunits. Subunits NuoA, H, J, K, L, M, N constitute the membrane sector of the complex.

The protein resides in the cell membrane. The catalysed reaction is a quinone + NADH + 5 H(+)(in) = a quinol + NAD(+) + 4 H(+)(out). Its function is as follows. NDH-1 shuttles electrons from NADH, via FMN and iron-sulfur (Fe-S) centers, to quinones in the respiratory chain. The immediate electron acceptor for the enzyme in this species is believed to be ubiquinone. Couples the redox reaction to proton translocation (for every two electrons transferred, four hydrogen ions are translocated across the cytoplasmic membrane), and thus conserves the redox energy in a proton gradient. In Chloroflexus aurantiacus (strain ATCC 29366 / DSM 635 / J-10-fl), this protein is NADH-quinone oxidoreductase subunit A.